The following is a 122-amino-acid chain: Movement protein TGB2 (122 aa).

At 1–12 the chain is on the cytoplasmic side; that stretch reads MVKSTVPTRPNK. The helical transmembrane segment at 13 to 33 threads the bilayer; it reads YWPGVVAIGLVSLFIFLSVSN. Residues 34–76 lie on the Lumenal side of the membrane; sequence QKHSTTSGDNIHKFSNGGTYRDGSKCITYNRNSPLAYNGSSSN. The chain crosses the membrane as a helical span at residues 77–97; the sequence is NTLFWLCLLGLSMVWIAYCGY. Topologically, residues 98-122 are cytoplasmic; it reads KSLSGQWHSCQHDKNERNFLFECFE.

The protein belongs to the virgaviridae/benyvirus TGB2 movement protein family. In terms of assembly, interacts with movement protein TGB3. TGB1-TGB3-TGB2 complex formation is enhanced by ATP hydrolysis.

The protein localises to the host cell junction. It is found in the host plasmodesma. It localises to the host endoplasmic reticulum membrane. Its subcellular location is the host cytoplasm. The protein resides in the host cytoskeleton. Its function is as follows. Participates in the transport of viral genome to neighboring plant cells directly through plasmodesmata, without any budding. TGBp2 and TGBp3 are necessary for intracellular delivery of TGBp1-containing vRNPs to plasmodesmata. Can gate plasmodesmata and increase their size exclusion limit. To a lesser extent than TGB3, induces host actin cytoskeleton network thickening, which probably plays a major role in virus cell-to-cell movement. In Peanut clump virus (isolate 87/TGTA2) (PCV), this protein is Movement protein TGB2.